The sequence spans 228 residues: 2-C-methyl-D-erythritol 4-phosphate cytidylyltransferase (228 aa).

The protein belongs to the IspD/TarI cytidylyltransferase family. IspD subfamily.

The enzyme catalyses 2-C-methyl-D-erythritol 4-phosphate + CTP + H(+) = 4-CDP-2-C-methyl-D-erythritol + diphosphate. Its pathway is isoprenoid biosynthesis; isopentenyl diphosphate biosynthesis via DXP pathway; isopentenyl diphosphate from 1-deoxy-D-xylulose 5-phosphate: step 2/6. In terms of biological role, catalyzes the formation of 4-diphosphocytidyl-2-C-methyl-D-erythritol from CTP and 2-C-methyl-D-erythritol 4-phosphate (MEP). In Halalkalibacterium halodurans (strain ATCC BAA-125 / DSM 18197 / FERM 7344 / JCM 9153 / C-125) (Bacillus halodurans), this protein is 2-C-methyl-D-erythritol 4-phosphate cytidylyltransferase.